The primary structure comprises 54 residues: Conotoxin vc5c (54 aa).

Residues 1 to 14 (VILLLLIASIPSDA) form the signal peptide. A propeptide spanning residues 15-43 (VQLKTKDDMPLASFHGNARRTLQMLSNKR) is cleaved from the precursor. The residue at position 50 (Glu50) is a 4-carboxyglutamate. Trp51 is modified (6'-bromotryptophan).

This sequence belongs to the conotoxin T superfamily. Post-translationally, contains 2 disulfide bonds that can be either 'C1-C3, C2-C4' or 'C1-C4, C2-C3', since these disulfide connectivities have been observed for conotoxins with cysteine framework V (for examples, see AC P0DQQ7 and AC P81755). In terms of tissue distribution, expressed by the venom duct.

The protein localises to the secreted. This Conus victoriae (Queen Victoria cone) protein is Conotoxin vc5c.